The following is a 543-amino-acid chain: Chaperonin GroEL (543 aa).

ATP-binding positions include 29–32, lysine 50, 86–90, glycine 415, and aspartate 495; these read TLGP and DGTTT.

The protein belongs to the chaperonin (HSP60) family. Forms a cylinder of 14 subunits composed of two heptameric rings stacked back-to-back. Interacts with the co-chaperonin GroES.

It localises to the cytoplasm. The enzyme catalyses ATP + H2O + a folded polypeptide = ADP + phosphate + an unfolded polypeptide.. Together with its co-chaperonin GroES, plays an essential role in assisting protein folding. The GroEL-GroES system forms a nano-cage that allows encapsulation of the non-native substrate proteins and provides a physical environment optimized to promote and accelerate protein folding. The chain is Chaperonin GroEL from Flavobacterium johnsoniae (strain ATCC 17061 / DSM 2064 / JCM 8514 / BCRC 14874 / CCUG 350202 / NBRC 14942 / NCIMB 11054 / UW101) (Cytophaga johnsonae).